An 880-amino-acid chain; its full sequence is Translation initiation factor IF-2 (880 aa).

The interval 1–251 (MVDTKNPGDK…PTAKPAPAKQ (251 aa)) is disordered. Over residues 58–79 (PADAPAAPAPVAAAKPAPVRAP) the composition is skewed to low complexity. The segment covering 115–183 (ARIRDEEERK…KRFGEEEAKK (69 aa)) has biased composition (basic and acidic residues). Composition is skewed to low complexity over residues 184–215 (AAAAAPAKTTAATTATAAKPGAPARAPGVAAD) and 233–250 (AARPVVAPKPTAKPAPAK). One can recognise a tr-type G domain in the interval 376–547 (PRSPVVTVMG…ALQAELLDLK (172 aa)). The interval 385 to 392 (GHVDHGKT) is G1. 385-392 (GHVDHGKT) is a binding site for GTP. Positions 410-414 (GITQH) are G2. A G3 region spans residues 433–436 (DTPG). GTP is bound by residues 433–437 (DTPGH) and 487–490 (NKID). The G4 stretch occupies residues 487–490 (NKID). The interval 523-525 (SAK) is G5.

It belongs to the TRAFAC class translation factor GTPase superfamily. Classic translation factor GTPase family. IF-2 subfamily.

The protein localises to the cytoplasm. One of the essential components for the initiation of protein synthesis. Protects formylmethionyl-tRNA from spontaneous hydrolysis and promotes its binding to the 30S ribosomal subunits. Also involved in the hydrolysis of GTP during the formation of the 70S ribosomal complex. The chain is Translation initiation factor IF-2 from Rhodopseudomonas palustris (strain BisB18).